The sequence spans 160 residues: Conopressin/conophysin, isoform 2 (160 aa).

The N-terminal stretch at 1–30 (MKCSVLQMSRLSWAMCLMLLMLLLLGTAQG) is a signal peptide. Cys31 and Cys36 are oxidised to a cystine. Gly39 carries the glycine amide modification. Residues 40–47 (GKRAVDAL) constitute a propeptide that is removed on maturation. Disulfide bonds link Cys53–Cys97, Cys56–Cys70, Cys64–Cys87, Cys71–Cys77, Cys104–Cys118, Cys112–Cys130, and Cys119–Cys124.

Belongs to the vasopressin/oxytocin family. As to expression, expressed by the venom gland.

The protein resides in the secreted. Functionally, targets vasopressin-oxytocin related receptors. The sequence is that of Conopressin/conophysin, isoform 2 from Conus monile (Necklace cone).